A 354-amino-acid polypeptide reads, in one-letter code: Probable N-acetylmuramoyl-L-alanine amidase (354 aa).

The N-terminal stretch at methionine 1–alanine 39 is a signal peptide. An N-acetylmuramoyl-L-alanine amidase domain is found at leucine 40 to threonine 152.

This sequence belongs to the N-acetylmuramoyl-L-alanine amidase 2 family.

The protein localises to the secreted. It carries out the reaction Hydrolyzes the link between N-acetylmuramoyl residues and L-amino acid residues in certain cell-wall glycopeptides.. The chain is Probable N-acetylmuramoyl-L-alanine amidase from Bacillus licheniformis.